The primary structure comprises 234 residues: Large ribosomal subunit protein uL1 (234 aa).

It belongs to the universal ribosomal protein uL1 family. As to quaternary structure, part of the 50S ribosomal subunit.

Functionally, binds directly to 23S rRNA. The L1 stalk is quite mobile in the ribosome, and is involved in E site tRNA release. Protein L1 is also a translational repressor protein, it controls the translation of the L11 operon by binding to its mRNA. This is Large ribosomal subunit protein uL1 from Klebsiella pneumoniae subsp. pneumoniae (strain ATCC 700721 / MGH 78578).